The following is a 308-amino-acid chain: Aspartate carbamoyltransferase catalytic subunit (308 aa).

Residues R49 and T50 each contribute to the carbamoyl phosphate site. K77 is a binding site for L-aspartate. The carbamoyl phosphate site is built by R99, H127, and Q130. R160 and R211 together coordinate L-aspartate. 2 residues coordinate carbamoyl phosphate: A252 and P253.

The protein belongs to the aspartate/ornithine carbamoyltransferase superfamily. ATCase family. Heterododecamer (2C3:3R2) of six catalytic PyrB chains organized as two trimers (C3), and six regulatory PyrI chains organized as three dimers (R2).

The catalysed reaction is carbamoyl phosphate + L-aspartate = N-carbamoyl-L-aspartate + phosphate + H(+). It functions in the pathway pyrimidine metabolism; UMP biosynthesis via de novo pathway; (S)-dihydroorotate from bicarbonate: step 2/3. Its function is as follows. Catalyzes the condensation of carbamoyl phosphate and aspartate to form carbamoyl aspartate and inorganic phosphate, the committed step in the de novo pyrimidine nucleotide biosynthesis pathway. The sequence is that of Aspartate carbamoyltransferase catalytic subunit from Geobacillus thermodenitrificans (strain NG80-2).